Consider the following 137-residue polypeptide: Large ribosomal subunit protein uL16 (137 aa).

This sequence belongs to the universal ribosomal protein uL16 family. In terms of assembly, part of the 50S ribosomal subunit.

In terms of biological role, binds 23S rRNA and is also seen to make contacts with the A and possibly P site tRNAs. The polypeptide is Large ribosomal subunit protein uL16 (Francisella tularensis subsp. tularensis (strain FSC 198)).